We begin with the raw amino-acid sequence, 881 residues long: Valine--tRNA ligase (881 aa).

The 'HIGH' region signature appears at 49 to 59 (PNVTGKLHLGH). Residues 526 to 530 (KMSKS) carry the 'KMSKS' region motif. Lysine 529 contributes to the ATP binding site. The stretch at 810–881 (LADLINLDEE…VRQRLADLEK (72 aa)) forms a coiled coil.

This sequence belongs to the class-I aminoacyl-tRNA synthetase family. ValS type 1 subfamily. In terms of assembly, monomer.

It is found in the cytoplasm. It catalyses the reaction tRNA(Val) + L-valine + ATP = L-valyl-tRNA(Val) + AMP + diphosphate. Functionally, catalyzes the attachment of valine to tRNA(Val). As ValRS can inadvertently accommodate and process structurally similar amino acids such as threonine, to avoid such errors, it has a 'posttransfer' editing activity that hydrolyzes mischarged Thr-tRNA(Val) in a tRNA-dependent manner. This is Valine--tRNA ligase from Bacillus cereus (strain ATCC 14579 / DSM 31 / CCUG 7414 / JCM 2152 / NBRC 15305 / NCIMB 9373 / NCTC 2599 / NRRL B-3711).